The chain runs to 145 residues: MVVIQNIIHDSSINEYDLSNTLQEVIKELDRGESELLIRLVNETEIKNLNKVYRHQDKLTNVLSFQSDLPIEIDEAVLGDVVICTQVVLKESIEQHKSFNNHLTHMAIHGMLHLLGYDHIDTKDAQQMENLEIKILAKIGINNPY.

3 residues coordinate Zn(2+): H109, H113, and H119.

Belongs to the endoribonuclease YbeY family. Requires Zn(2+) as cofactor.

It localises to the cytoplasm. In terms of biological role, single strand-specific metallo-endoribonuclease involved in late-stage 70S ribosome quality control and in maturation of the 3' terminus of the 16S rRNA. The polypeptide is Endoribonuclease YbeY (Ruthia magnifica subsp. Calyptogena magnifica).